The chain runs to 851 residues: DNA mismatch repair protein MutS (851 aa).

ATP is bound at residue 614 to 621 (GPNMGGKS).

The protein belongs to the DNA mismatch repair MutS family.

Its function is as follows. This protein is involved in the repair of mismatches in DNA. It is possible that it carries out the mismatch recognition step. This protein has a weak ATPase activity. The sequence is that of DNA mismatch repair protein MutS from Photorhabdus laumondii subsp. laumondii (strain DSM 15139 / CIP 105565 / TT01) (Photorhabdus luminescens subsp. laumondii).